The primary structure comprises 203 residues: N-(5'-phosphoribosyl)anthranilate isomerase (203 aa).

Belongs to the TrpF family.

It carries out the reaction N-(5-phospho-beta-D-ribosyl)anthranilate = 1-(2-carboxyphenylamino)-1-deoxy-D-ribulose 5-phosphate. The protein operates within amino-acid biosynthesis; L-tryptophan biosynthesis; L-tryptophan from chorismate: step 3/5. In Caldanaerobacter subterraneus subsp. tengcongensis (strain DSM 15242 / JCM 11007 / NBRC 100824 / MB4) (Thermoanaerobacter tengcongensis), this protein is N-(5'-phosphoribosyl)anthranilate isomerase.